Consider the following 357-residue polypeptide: Phenylalanine--tRNA ligase alpha subunit (357 aa).

Residue E257 participates in Mg(2+) binding.

It belongs to the class-II aminoacyl-tRNA synthetase family. Phe-tRNA synthetase alpha subunit type 1 subfamily. As to quaternary structure, tetramer of two alpha and two beta subunits. Requires Mg(2+) as cofactor.

The protein localises to the cytoplasm. The catalysed reaction is tRNA(Phe) + L-phenylalanine + ATP = L-phenylalanyl-tRNA(Phe) + AMP + diphosphate + H(+). This Roseobacter denitrificans (strain ATCC 33942 / OCh 114) (Erythrobacter sp. (strain OCh 114)) protein is Phenylalanine--tRNA ligase alpha subunit.